A 368-amino-acid polypeptide reads, in one-letter code: tRNA-specific 2-thiouridylase MnmA (368 aa).

ATP is bound by residues 11–18 (GMSGGVDS) and M37. The interval 97-99 (NPD) is interaction with target base in tRNA. C102 acts as the Nucleophile in catalysis. The cysteines at positions 102 and 199 are disulfide-linked. An ATP-binding site is contributed by G127. The tract at residues 149-151 (KDQ) is interaction with tRNA. The active-site Cysteine persulfide intermediate is C199. Positions 311–312 (RY) are interaction with tRNA.

It belongs to the MnmA/TRMU family. In terms of assembly, interacts with TusE.

The protein resides in the cytoplasm. The enzyme catalyses S-sulfanyl-L-cysteinyl-[protein] + uridine(34) in tRNA + AH2 + ATP = 2-thiouridine(34) in tRNA + L-cysteinyl-[protein] + A + AMP + diphosphate + H(+). Catalyzes the 2-thiolation of uridine at the wobble position (U34) of tRNA(Lys), tRNA(Glu) and tRNA(Gln), leading to the formation of s(2)U34, the first step of tRNA-mnm(5)s(2)U34 synthesis. Sulfur is provided by IscS, via a sulfur-relay system. Binds ATP and its substrate tRNAs. The sequence is that of tRNA-specific 2-thiouridylase MnmA from Escherichia coli O139:H28 (strain E24377A / ETEC).